The following is a 130-amino-acid chain: Small ribosomal subunit protein uS8 (130 aa).

The protein belongs to the universal ribosomal protein uS8 family. As to quaternary structure, part of the 30S ribosomal subunit. Contacts proteins S5 and S12.

Its function is as follows. One of the primary rRNA binding proteins, it binds directly to 16S rRNA central domain where it helps coordinate assembly of the platform of the 30S subunit. This chain is Small ribosomal subunit protein uS8, found in Buchnera aphidicola subsp. Schizaphis graminum (strain Sg).